The following is a 625-amino-acid chain: Probable potassium transport system protein Kup (625 aa).

12 helical membrane-spanning segments follow: residues 10 to 30, 50 to 70, 102 to 122, 142 to 162, 172 to 192, 215 to 235, 250 to 270, 284 to 304, 340 to 360, 369 to 389, 397 to 417, and 422 to 442; these read LAALTLAAVGIVYGDIGTSPL, LLGVVSLIVWGLIIIVSLKYV, YFPLLVMGLFGATLFYGDSVI, FDPYVVPLTVAVLVGLYSVQA, FGPIMVVWFATLAVMGVVNII, FLAFIALGAVVLAFTGAEALY, WFLVAFPALALNYLGQGALLL, LGAWSIYPLVALSTMAAIIAS, IYIPAVNWLQMAVVVMAVVGF, AYGIAVTATMLVTTILTFFVI, LLLCLASTGFFLVIDLSLFSA, and LFHGGWFPLLLGTILFTLMLT.

This sequence belongs to the HAK/KUP transporter (TC 2.A.72) family.

The protein localises to the cell inner membrane. It carries out the reaction K(+)(in) + H(+)(in) = K(+)(out) + H(+)(out). In terms of biological role, transport of potassium into the cell. Likely operates as a K(+):H(+) symporter. The sequence is that of Probable potassium transport system protein Kup from Janthinobacterium sp. (strain Marseille) (Minibacterium massiliensis).